A 387-amino-acid chain; its full sequence is Large ribosomal subunit protein uL3 (387 aa).

It belongs to the universal ribosomal protein uL3 family.

Its subcellular location is the cytoplasm. The polypeptide is Large ribosomal subunit protein uL3 (RPL3) (Candida glabrata (strain ATCC 2001 / BCRC 20586 / JCM 3761 / NBRC 0622 / NRRL Y-65 / CBS 138) (Yeast)).